The primary structure comprises 74 residues: Guanine nucleotide-binding protein G(T) subunit gamma-T1 (74 aa).

The residue at position 71 (Cys71) is a Cysteine methyl ester. Residue Cys71 is the site of S-farnesyl cysteine attachment. Positions 72–74 (VIS) are cleaved as a propeptide — removed in mature form.

This sequence belongs to the G protein gamma family. G proteins are composed of 3 units, alpha, beta and gamma. As to expression, retinal rod outer segment.

It is found in the cell membrane. In terms of biological role, guanine nucleotide-binding proteins (G proteins) are involved as a modulator or transducer in various transmembrane signaling systems. The beta and gamma chains are required for the GTPase activity, for replacement of GDP by GTP, and for G protein-effector interaction. This Mus musculus (Mouse) protein is Guanine nucleotide-binding protein G(T) subunit gamma-T1 (Gngt1).